The chain runs to 542 residues: Chaperonin GroEL (542 aa).

ATP-binding positions include 29 to 32 (TLGP), 86 to 90 (DGTTT), Gly-413, and Asp-493.

This sequence belongs to the chaperonin (HSP60) family. Forms a cylinder of 14 subunits composed of two heptameric rings stacked back-to-back. Interacts with the co-chaperonin GroES.

It localises to the cytoplasm. It carries out the reaction ATP + H2O + a folded polypeptide = ADP + phosphate + an unfolded polypeptide.. Together with its co-chaperonin GroES, plays an essential role in assisting protein folding. The GroEL-GroES system forms a nano-cage that allows encapsulation of the non-native substrate proteins and provides a physical environment optimized to promote and accelerate protein folding. This Elusimicrobium minutum (strain Pei191) protein is Chaperonin GroEL.